A 250-amino-acid chain; its full sequence is LNELSFNFDKFVPNQNNILFQGVASVSTTGVLQVTKVTNTGIKRALYAAPIHAWDDDSETGKVASFATSFSFVVKEPPIQSRKADGVDGLAFFLAPANSQIPSGSSAGMFGLFCSSDYNSSNQIIAVEFDTYFGKAYNPWDPDFKHIGVDVNSIKSIKTVKWDWRNGDVANVVITYRAPTKSLTVSLSYPSDQTSNIVTASVDLKAILPEWVSVGFSAGVGNAAKFNHDILSWYFTSNLEPNNPAVNQAQ.

A glycan (N-linked (GlcNAc...) asparagine; partial) is linked at Asn-119. Glu-128 and Asp-130 together coordinate Mn(2+). Asp-130, Tyr-132, Asn-138, and Asp-141 together coordinate Ca(2+). Mn(2+) is bound by residues Asp-141 and His-146.

The protein belongs to the leguminous lectin family.

Functionally, di-N-acetylchitobiose specific lectin. The sequence is that of Lectin 1 from Laburnum alpinum (Scotch laburnum).